A 501-amino-acid polypeptide reads, in one-letter code: Putative BTB/POZ domain-containing protein L107 (501 aa).

Residues 16–87 (TDLELTLVDS…FYITDIERSQ (72 aa)) enclose the BTB domain.

The protein belongs to the mimivirus BTB/WD family.

This is Putative BTB/POZ domain-containing protein L107 from Acanthamoeba polyphaga mimivirus (APMV).